The sequence spans 406 residues: DAZ-associated protein 1 (406 aa).

M1 is modified (N-acetylmethionine). RRM domains lie at 10-97 (GKLF…RTRP) and 113-190 (NKIF…RAEP). The disordered stretch occupies residues 74-117 (TLDGRNIDPKPCTPRGMQPERTRPKEGWQKGPRSDSSKSNKIFV). Basic and acidic residues predominate over residues 91 to 111 (QPERTRPKEGWQKGPRSDSSK). At K150 the chain carries N6-acetyllysine. The interval 186 to 406 (KRAEPRDSKN…NVQGFHPYRR (221 aa)) is disordered. Over residues 195–207 (NQAPGQPGASQWG) the composition is skewed to polar residues. Pro residues predominate over residues 247–262 (GPPPAGRGAPPPPPPF). R253 is modified (omega-N-methylarginine). The segment covering 280–294 (FPQGYGAPPQFSFGY) has biased composition (low complexity). Positions 295–315 (GPPPPPPDQFAPPGVPPPPAT) are enriched in pro residues. Residues 363–378 (SDPSQQPPSYGGPSVP) show a composition bias toward low complexity. Gly residues predominate over residues 379 to 392 (GSGGPPAGGSGFGR).

Interacts with DAZ and DAZL. Post-translationally, acetylation at Lys-150 is predominantly observed in the nuclear fraction, and may regulate nucleocytoplasmic transport. As to expression, mainly expressed in testis. Expressed at much lower level in liver, heart and brain. Also expressed in ovary. Expressed throughout testes development, in both the prenatal and postnatal periods.

Its subcellular location is the cytoplasm. It is found in the nucleus. RNA-binding protein, which may be required during spermatogenesis. The polypeptide is DAZ-associated protein 1 (Dazap1) (Mus musculus (Mouse)).